The primary structure comprises 405 residues: Cytochrome P450 107B1 (405 aa).

C352 contributes to the heme binding site.

The protein belongs to the cytochrome P450 family. Heme serves as cofactor.

The protein localises to the cytoplasm. Not known, probably involved in the catabolism of octane and guaiacol. It displays a weak activity in the O-dealkylation of 7-ethoxycoumarin. This is Cytochrome P450 107B1 (cyp107B1) from Saccharopolyspora erythraea (strain ATCC 11635 / DSM 40517 / JCM 4748 / NBRC 13426 / NCIMB 8594 / NRRL 2338).